Reading from the N-terminus, the 180-residue chain is MSSASPIRVIGIDPGSNVTGWGVIDGLGQRQQVVEYGTIRLDGKEPLPMRLHQIHAQLVSLIQRLQPHEMAVEEVFVSQNVQSALKLGHARGAAIVAGAQMGLPIAEYTAMQVKKAVVGYGRAEKNQMQEMMRMLLNLDKKPAQDAADGLAIAMCHLNQRQWHQQTLPAAILGLQRGGRA.

Active-site residues include aspartate 13, glutamate 73, and aspartate 145. The Mg(2+) site is built by aspartate 13, glutamate 73, and aspartate 145.

The protein belongs to the RuvC family. Homodimer which binds Holliday junction (HJ) DNA. The HJ becomes 2-fold symmetrical on binding to RuvC with unstacked arms; it has a different conformation from HJ DNA in complex with RuvA. In the full resolvosome a probable DNA-RuvA(4)-RuvB(12)-RuvC(2) complex forms which resolves the HJ. The cofactor is Mg(2+).

The protein localises to the cytoplasm. The catalysed reaction is Endonucleolytic cleavage at a junction such as a reciprocal single-stranded crossover between two homologous DNA duplexes (Holliday junction).. Functionally, the RuvA-RuvB-RuvC complex processes Holliday junction (HJ) DNA during genetic recombination and DNA repair. Endonuclease that resolves HJ intermediates. Cleaves cruciform DNA by making single-stranded nicks across the HJ at symmetrical positions within the homologous arms, yielding a 5'-phosphate and a 3'-hydroxyl group; requires a central core of homology in the junction. The consensus cleavage sequence is 5'-(A/T)TT(C/G)-3'. Cleavage occurs on the 3'-side of the TT dinucleotide at the point of strand exchange. HJ branch migration catalyzed by RuvA-RuvB allows RuvC to scan DNA until it finds its consensus sequence, where it cleaves and resolves the cruciform DNA. This chain is Crossover junction endodeoxyribonuclease RuvC, found in Magnetococcus marinus (strain ATCC BAA-1437 / JCM 17883 / MC-1).